The following is a 300-amino-acid chain: FeMo cofactor biosynthesis protein NifB (300 aa).

Residues 24-266 (HDKVGRVHLP…PQFRACGQCR (243 aa)) form the Radical SAM core domain. 3 residues coordinate [4Fe-4S] cluster: C38, C42, and C45. Positions 93, 144, and 196 each coordinate S-adenosyl-L-methionine. Residues C262 and C265 each coordinate [4Fe-4S] cluster.

Belongs to the radical SAM superfamily. NifB family. Monomer. [4Fe-4S] cluster is required as a cofactor.

The protein operates within cofactor biosynthesis; Fe-Mo cofactor biosynthesis. In terms of biological role, involved in the biosynthesis of the iron-molybdenum cofactor (FeMo-co or M-cluster) found in the dinitrogenase enzyme of the nitrogenase complex in nitrogen-fixing microorganisms. NifB catalyzes the crucial step of radical SAM-dependent carbide insertion that occurs concomitant with the insertion of a 9th sulfur and the rearrangement/coupling of two [4Fe-4S] clusters into a [8Fe-9S-C] cluster, the precursor to the M-cluster. This Methanocaldococcus jannaschii (strain ATCC 43067 / DSM 2661 / JAL-1 / JCM 10045 / NBRC 100440) (Methanococcus jannaschii) protein is FeMo cofactor biosynthesis protein NifB.